Here is an 83-residue protein sequence, read N- to C-terminus: Non-muscle caldesmon (83 aa).

Basic and acidic residues-rich tracts occupy residues 1 to 44 and 62 to 76; these read QTSE…KEEK and NQLK…KESK. Positions 1–63 are myosin and calmodulin-binding; it reads QTSEKEGRSE…PKPGSIEENQ (63 aa). The segment at 1 to 83 is disordered; sequence QTSEKEGRSE…ESKNILSLCL (83 aa).

Post-translationally, in non-muscle cells, phosphorylation by CDC2 during mitosis causes caldesmon to dissociate from microfilaments. Phosphorylation reduces caldesmon binding to actin, myosin, and calmodulin as well as its inhibition of actomyosin ATPase activity. Phosphorylation also occurs in both quiescent and dividing smooth muscle cells with similar effects on the interaction with actin and calmodulin and on microfilaments reorganization.

It localises to the cytoplasm. The protein localises to the cytoskeleton. It is found in the myofibril. Its subcellular location is the stress fiber. Actin- and myosin-binding protein implicated in the regulation of actomyosin interactions in smooth muscle and nonmuscle cells (could act as a bridge between myosin and actin filaments). Stimulates actin binding of tropomyosin which increases the stabilization of actin filament structure. In muscle tissues, inhibits the actomyosin ATPase by binding to F-actin. This inhibition is attenuated by calcium-calmodulin and is potentiated by tropomyosin. Interacts with actin, myosin, two molecules of tropomyosin and with calmodulin. Also plays an essential role during cellular mitosis and receptor capping. In Bos taurus (Bovine), this protein is Non-muscle caldesmon (CALD1).